A 174-amino-acid chain; its full sequence is UPF0340 protein MW2038 (174 aa).

The protein belongs to the UPF0340 family.

This chain is UPF0340 protein MW2038, found in Staphylococcus aureus (strain MW2).